The primary structure comprises 341 residues: Probable cytosolic iron-sulfur protein assembly protein Ciao1 (341 aa).

7 WD repeats span residues 12-51, 58-97, 102-141, 151-190, 197-236, 255-294, and 305-341; these read GHAGRVWSAAWHPGGKLFASCGEDKTIRVWNKSDTDRWVA, GHTRTIRELAWSCCGHYLASASFDTTVAVWDKKSGEFECN, GHDNEVKSVTWSRSGNLLATCSRDKSVWIWEIHHAPDQED, GHTQDVKKVCWHPQEDLLASASYDNTIRMYRQDLADSEWE, SHSSTVWSISFDATGQRLASCSEDTTVKVWQQYGPDNALG, YHSRSVYDIDWCKQTGLLATACGDDTVRIFREASDSDRNE, and AHSQDANKVAWHPTVPGLLLTASDDGEIKLWQYVDAD.

It belongs to the WD repeat CIA1 family.

Functionally, essential component of the cytosolic iron-sulfur (Fe/S) protein assembly machinery. Required for the maturation of extramitochondrial Fe/S proteins. The polypeptide is Probable cytosolic iron-sulfur protein assembly protein Ciao1 (Anopheles gambiae (African malaria mosquito)).